Reading from the N-terminus, the 101-residue chain is Urease subunit gamma (101 aa).

The protein belongs to the urease gamma subunit family. In terms of assembly, heterotrimer of UreA (gamma), UreB (beta) and UreC (alpha) subunits. Three heterotrimers associate to form the active enzyme.

The protein localises to the cytoplasm. It catalyses the reaction urea + 2 H2O + H(+) = hydrogencarbonate + 2 NH4(+). The protein operates within nitrogen metabolism; urea degradation; CO(2) and NH(3) from urea (urease route): step 1/1. In Ureaplasma urealyticum (Ureaplasma urealyticum biotype 2), this protein is Urease subunit gamma.